We begin with the raw amino-acid sequence, 277 residues long: Proteasome subunit beta type-7 (277 aa).

The propeptide at 1–43 (MAAVSVYAPPVGGFSFDNCRRNAVLEADFAKRGYKLPKVRKTG) is removed in mature form. The Nucleophile role is filled by Thr-44.

This sequence belongs to the peptidase T1B family. As to quaternary structure, the 26S proteasome consists of a 20S proteasome core and two 19S regulatory subunits. The 20S proteasome core is a barrel-shaped complex made of 28 subunits that are arranged in four stacked rings. The two outer rings are each formed by seven alpha subunits, and the two inner rings are formed by seven beta subunits. The proteolytic activity is exerted by three beta-subunits PSMB5, PSMB6 and PSMB7. (Microbial infection) Interacts with HIV-1 Tat protein. In terms of tissue distribution, expressed at a low level in colonic mucosa. Up-regulated in colorectal cancer tissues.

The protein localises to the cytoplasm. It localises to the nucleus. It carries out the reaction Cleavage of peptide bonds with very broad specificity.. In terms of biological role, component of the 20S core proteasome complex involved in the proteolytic degradation of most intracellular proteins. This complex plays numerous essential roles within the cell by associating with different regulatory particles. Associated with two 19S regulatory particles, forms the 26S proteasome and thus participates in the ATP-dependent degradation of ubiquitinated proteins. The 26S proteasome plays a key role in the maintenance of protein homeostasis by removing misfolded or damaged proteins that could impair cellular functions, and by removing proteins whose functions are no longer required. Associated with the PA200 or PA28, the 20S proteasome mediates ubiquitin-independent protein degradation. This type of proteolysis is required in several pathways including spermatogenesis (20S-PA200 complex) or generation of a subset of MHC class I-presented antigenic peptides (20S-PA28 complex). Within the 20S core complex, PSMB7 displays a trypsin-like activity. In Homo sapiens (Human), this protein is Proteasome subunit beta type-7.